Consider the following 332-residue polypeptide: Delta-aminolevulinic acid dehydratase (332 aa).

The active-site Schiff-base intermediate with substrate is K199. Residues R209 and K221 each coordinate 5-aminolevulinate. E237 contacts Mg(2+). Catalysis depends on K252, which acts as the Schiff-base intermediate with substrate. The 5-aminolevulinate site is built by S278 and Y317.

Belongs to the ALAD family. As to quaternary structure, homooctamer.

It carries out the reaction 2 5-aminolevulinate = porphobilinogen + 2 H2O + H(+). It participates in porphyrin-containing compound metabolism; protoporphyrin-IX biosynthesis; coproporphyrinogen-III from 5-aminolevulinate: step 1/4. Catalyzes an early step in the biosynthesis of tetrapyrroles. Binds two molecules of 5-aminolevulinate per subunit, each at a distinct site, and catalyzes their condensation to form porphobilinogen. This Chlamydia pneumoniae (Chlamydophila pneumoniae) protein is Delta-aminolevulinic acid dehydratase (hemB).